A 332-amino-acid polypeptide reads, in one-letter code: HTH-type transcriptional regulator IdnR (332 aa).

Residues 6 to 60 form the HTH lacI-type domain; that stretch reads ISLQDIATLAGVTKMTVSRYIRSPKKVAKETGERIAKIMEEINYIPNRAPGMLLN. The segment at residues 8–27 is a DNA-binding region (H-T-H motif); sequence LQDIATLAGVTKMTVSRYIR.

Functionally, idn operon regulator. May repress gntKU and gntT genes when growing on L-idonate. The chain is HTH-type transcriptional regulator IdnR (idnR) from Escherichia coli (strain K12).